The following is a 432-amino-acid chain: Luc7-like protein 3 (432 aa).

The residue at position 1 (methionine 1) is an N-acetylmethionine. A phosphoserine mark is found at serine 3, serine 110, and serine 115. Residues 124–181 are a coiled coil; the sequence is KNEEKIQVLTDKIDVLLQQIEELGSEGKVEEAQGMMKLVEQLKEERELLRSTTSTIES. Residue lysine 231 is modified to N6-acetyllysine. Positions 234–287 are enriched in basic and acidic residues; sequence LRKRTEEPDRDERLKKEKQEREEREKEREREREERERKRRREEEEREKERARDR. Positions 234–432 are disordered; that stretch reads LRKRTEEPDR…IKSEGDTQSN (199 aa). Basic residues predominate over residues 288–301; that stretch reads ERRKRSRSRSRHSS. Residues 302 to 311 show a composition bias toward basic and acidic residues; the sequence is RTSDRRCSRS. Residues 312–367 are compositionally biased toward basic residues; it reads RDHKRSRSRDRRRSRSRDRRRSRSHDRSERKHRSRSRDRRRSKSRDRKSYKHRSKS. Basic and acidic residues predominate over residues 368-414; sequence RDREQDRKSKEKEKKGSDDKKSSVKSSSREKQSEDTNPESKESDTKN. Serine 420 is modified (phosphoserine). The segment covering 421-432 has biased composition (basic and acidic residues); the sequence is EDIKSEGDTQSN. Lysine 424 participates in a covalent cross-link: Glycyl lysine isopeptide (Lys-Gly) (interchain with G-Cter in SUMO1); alternate. Lysine 424 participates in a covalent cross-link: Glycyl lysine isopeptide (Lys-Gly) (interchain with G-Cter in SUMO2); alternate. A phosphoserine mark is found at serine 425 and serine 431.

This sequence belongs to the Luc7 family. May interact with SFRS1 and form homodimers. Interacts with JMJD6. Interacts with RBM25. Interacts with RSRC1 (via Arg/Ser-rich domain). Interacts with RRP1B.

Its subcellular location is the nucleus speckle. Functionally, binds cAMP regulatory element DNA sequence. May play a role in RNA splicing. The polypeptide is Luc7-like protein 3 (Luc7l3) (Mus musculus (Mouse)).